A 514-amino-acid polypeptide reads, in one-letter code: Ankyrin repeat domain-containing protein 34B (514 aa).

ANK repeat units follow at residues 9–38 (SEGN…YINE), 42–79 (RGET…DPNI), 83–113 (SGKT…DLSL), and 117–146 (SSYS…AKGK). The disordered stretch occupies residues 220–249 (NDDTWDPGSPVRKPALAPKGPKLPHAPPWV). At S263 the chain carries Phosphoserine. Phosphothreonine is present on T272. Phosphoserine is present on S296.

It belongs to the ANKRD34 family. Post-translationally, phosphorylated.

Its subcellular location is the cytoplasm. It is found in the nucleus. This is Ankyrin repeat domain-containing protein 34B (ANKRD34B) from Homo sapiens (Human).